The following is a 743-amino-acid chain: Catalase-peroxidase (743 aa).

Over residues 1 to 15 the composition is skewed to polar residues; sequence MSSDSRPPQPDTSTQ. The tract at residues 1-40 is disordered; sequence MSSDSRPPQPDTSTQSNSESESPAISSPTPQDHAPMTNRD. The span at 16 to 28 shows a compositional bias: low complexity; the sequence is SNSESESPAISSP. The segment at residues 110–233 is a cross-link (tryptophyl-tyrosyl-methioninium (Trp-Tyr) (with M-259)); it reads WHAAGTYRIQ…YGATTMGLIY (124 aa). Residue histidine 111 is the Proton acceptor of the active site. Residues 233–259 constitute a cross-link (tryptophyl-tyrosyl-methioninium (Tyr-Met) (with W-110)); it reads YVNPEGPEGKPDPVAAAHDIRETFARM. Position 274 (histidine 274) interacts with heme b. Positions 490–511 are disordered; the sequence is DKRGGANGGRLRLEPQKSWESN.

It belongs to the peroxidase family. Peroxidase/catalase subfamily. Homodimer or homotetramer. Requires heme b as cofactor. Post-translationally, formation of the three residue Trp-Tyr-Met cross-link is important for the catalase, but not the peroxidase activity of the enzyme.

It catalyses the reaction H2O2 + AH2 = A + 2 H2O. It carries out the reaction 2 H2O2 = O2 + 2 H2O. Bifunctional enzyme with both catalase and broad-spectrum peroxidase activity. This Mycobacterium marinum (strain ATCC BAA-535 / M) protein is Catalase-peroxidase.